The following is a 229-amino-acid chain: MISKEYEFGKTSILNRKKYTLVIDEDKNGNFIRFTVLPVSNRKFKKVKQNGRVEINMGIQYHQIVLILLLNILFYVICLRSRFLEHINRTFEVTIARSFQILIIMGLFALGTIILVRGPSVETVTIFKESGLQLSRVKGMVIFPQQWNRKFFEQVEFISNERIIDVVINEGFCRGFRVIFYLAAIVRKSSTLKLLFPSNLPSIDDQRLIYNISRKYLSKQEKPLSRPKD.

Helical transmembrane passes span 59–79 (IQYHQIVLILLLNILFYVICL) and 101–121 (ILIIMGLFALGTIILVRGPSV).

It belongs to the PIGH family. As to quaternary structure, component of the phosphatidylinositol N-acetylglucosaminyltransferase (GPI-GlcNAc transferase) complex composed of at least GPI1, GPI2, GPI3, GPI15, GPI19 and ERI1.

Its subcellular location is the membrane. The enzyme catalyses a 1,2-diacyl-sn-glycero-3-phospho-(1D-myo-inositol) + UDP-N-acetyl-alpha-D-glucosamine = a 6-(N-acetyl-alpha-D-glucosaminyl)-1-(1,2-diacyl-sn-glycero-3-phospho)-1D-myo-inositol + UDP + H(+). Its pathway is glycolipid biosynthesis; glycosylphosphatidylinositol-anchor biosynthesis. In terms of biological role, part of the complex catalyzing the transfer of N-acetylglucosamine from UDP-N-acetylglucosamine to phosphatidylinositol, the first step of GPI biosynthesis. This Saccharomyces cerevisiae (strain ATCC 204508 / S288c) (Baker's yeast) protein is Phosphatidylinositol N-acetylglucosaminyltransferase subunit GPI15 (GPI15).